The primary structure comprises 139 residues: Cuticle protein 76 (139 aa).

6 consecutive repeat copies span residues 7 to 10 (AAPA), 68 to 71 (AAPA), 75 to 78 (AAPV), 93 to 95 (AAP), 105 to 108 (AAPA), and 121 to 124 (AAPA).

In terms of biological role, component of the cuticle of migratory locust which contains more than 100 different structural proteins. The polypeptide is Cuticle protein 76 (Locusta migratoria (Migratory locust)).